Here is a 324-residue protein sequence, read N- to C-terminus: MKPSVILYKALPDDLLQRLQEHFTVHQVANLSPQTVEQNAAIFAEAEGLLGSNENVDAALLEKMPKLRATSTISVGYDNFDVDALTARKILLMHTPTVLTETVADTLMALVLSTARRVVEVAERVKAGEWTASIGPDWYGTDVHHKTLGIVGMGRIGMALAQRAQFGFNMPILYNARRHHKEAEERFNARYCDLDTLLQESDFVCLILPLTDETHHLFGAEQFAKMKSSAIFINAGRGPVVDENALIAALQKGEIHAAGLDVFEQEPLSVDSPLLSMANVVAVPHIGSATHETRYGMAACAVDNLIDALQGKVEKNCVNPHVAD.

Residues arginine 237 and glutamate 266 contribute to the active site. Histidine 285 functions as the Proton donor in the catalytic mechanism.

Belongs to the D-isomer specific 2-hydroxyacid dehydrogenase family. GhrB subfamily. In terms of assembly, homodimer.

Its subcellular location is the cytoplasm. It carries out the reaction glycolate + NADP(+) = glyoxylate + NADPH + H(+). The catalysed reaction is (R)-glycerate + NAD(+) = 3-hydroxypyruvate + NADH + H(+). It catalyses the reaction (R)-glycerate + NADP(+) = 3-hydroxypyruvate + NADPH + H(+). In terms of biological role, catalyzes the NADPH-dependent reduction of glyoxylate and hydroxypyruvate into glycolate and glycerate, respectively. The polypeptide is Glyoxylate/hydroxypyruvate reductase B (Escherichia coli (strain SMS-3-5 / SECEC)).